A 184-amino-acid polypeptide reads, in one-letter code: Helix-loop-helix protein ngn-1 (184 aa).

The tract at residues 1–55 is disordered; that stretch reads MYHHSPFYPHHLQTGEQDLDMERENDMDQNSKNSTQKPVKREKRRYRCRKRSPAT. Polar residues predominate over residues 28–37; the sequence is DQNSKNSTQK. The segment covering 38-52 has biased composition (basic residues); it reads PVKREKRRYRCRKRS. Positions 62–75 are basic motif; the sequence is VRRDKANARERRRM. The bHLH domain maps to 62 to 114; sequence VRRDKANARERRRMNSLNDALEHLRGILPALPDEPKMTKIETLRKAQEYIASL. A helix-loop-helix motif region spans residues 76–114; it reads NSLNDALEHLRGILPALPDEPKMTKIETLRKAQEYIASL. Residues 164 to 184 are disordered; it reads SNPPSQMYYHHHHQSPSFPHH. Residues 172–184 are compositionally biased toward basic residues; sequence YHHHHQSPSFPHH.

In terms of assembly, interacts with hlh-2; the interaction is direct.

Its subcellular location is the nucleus. In terms of biological role, acts as a transcriptional regulator. Regulates expression of various genes, including homeobox protein unc-42 and helix-loop-helix protein hlh-34. Required for embryonic viability, neuromuscular development, organization of the nerve ring and neuronal cell body location. Regulates AIY neuron axon morphology and cell fate. Plays a role in cell autonomously establishing a neuronal left-right asymmetry. Involved in regulating glial specification. The sequence is that of Helix-loop-helix protein ngn-1 from Caenorhabditis elegans.